A 156-amino-acid polypeptide reads, in one-letter code: ATP synthase subunit b (156 aa).

The chain crosses the membrane as a helical span at residues 7 to 27 (LFAQMVVFLILAWFTMKFVWP).

The protein belongs to the ATPase B chain family. As to quaternary structure, F-type ATPases have 2 components, F(1) - the catalytic core - and F(0) - the membrane proton channel. F(1) has five subunits: alpha(3), beta(3), gamma(1), delta(1), epsilon(1). F(0) has three main subunits: a(1), b(2) and c(10-14). The alpha and beta chains form an alternating ring which encloses part of the gamma chain. F(1) is attached to F(0) by a central stalk formed by the gamma and epsilon chains, while a peripheral stalk is formed by the delta and b chains.

The protein resides in the cell inner membrane. Its function is as follows. F(1)F(0) ATP synthase produces ATP from ADP in the presence of a proton or sodium gradient. F-type ATPases consist of two structural domains, F(1) containing the extramembraneous catalytic core and F(0) containing the membrane proton channel, linked together by a central stalk and a peripheral stalk. During catalysis, ATP synthesis in the catalytic domain of F(1) is coupled via a rotary mechanism of the central stalk subunits to proton translocation. Functionally, component of the F(0) channel, it forms part of the peripheral stalk, linking F(1) to F(0). The sequence is that of ATP synthase subunit b from Paraburkholderia xenovorans (strain LB400).